The following is a 702-amino-acid chain: Ribosomal RNA large subunit methyltransferase K/L (702 aa).

Positions 43–154 (LVYQSLMWSR…KETASIALDL (112 aa)) constitute a THUMP domain.

This sequence belongs to the methyltransferase superfamily. RlmKL family.

It localises to the cytoplasm. It catalyses the reaction guanosine(2445) in 23S rRNA + S-adenosyl-L-methionine = N(2)-methylguanosine(2445) in 23S rRNA + S-adenosyl-L-homocysteine + H(+). It carries out the reaction guanosine(2069) in 23S rRNA + S-adenosyl-L-methionine = N(2)-methylguanosine(2069) in 23S rRNA + S-adenosyl-L-homocysteine + H(+). Functionally, specifically methylates the guanine in position 2445 (m2G2445) and the guanine in position 2069 (m7G2069) of 23S rRNA. This is Ribosomal RNA large subunit methyltransferase K/L from Escherichia coli O1:K1 / APEC.